The sequence spans 272 residues: 1,4-dihydroxy-2-naphthoyl-CoA synthase (272 aa).

Substrate is bound by residues R33, S72 to Q76, Y84, Y116 to G120, T142, S148, Y245, and K260. Hydrogencarbonate is bound at residue Q141–G143. A compositionally biased stretch (basic and acidic residues) spans G253 to D264. The disordered stretch occupies residues G253 to P272.

Belongs to the enoyl-CoA hydratase/isomerase family. MenB subfamily. Hydrogencarbonate is required as a cofactor.

It catalyses the reaction 2-succinylbenzoyl-CoA + H(+) = 1,4-dihydroxy-2-naphthoyl-CoA + H2O. The protein operates within quinol/quinone metabolism; 1,4-dihydroxy-2-naphthoate biosynthesis; 1,4-dihydroxy-2-naphthoate from chorismate: step 6/7. Its pathway is quinol/quinone metabolism; menaquinone biosynthesis. Functionally, converts o-succinylbenzoyl-CoA (OSB-CoA) to 1,4-dihydroxy-2-naphthoyl-CoA (DHNA-CoA). The sequence is that of 1,4-dihydroxy-2-naphthoyl-CoA synthase from Staphylococcus haemolyticus (strain JCSC1435).